The chain runs to 1182 residues: Lysine-specific demethylase hairless (1182 aa).

4 disordered regions span residues Leu-227–Arg-257, Tyr-302–Trp-380, Ala-411–Trp-443, and Thr-507–Asn-546. Positions Pro-307–Pro-321 are enriched in pro residues. The short motif at Leu-561–Leu-565 is the LXXLL motif 1 element. The segment at Cys-595–Cys-620 adopts a C6-type zinc-finger fold. A disordered region spans residues Gly-697–Ser-746. Residues Asn-722–Thr-731 are compositionally biased toward basic and acidic residues. The LXXLL motif 2 motif lies at Leu-753–Leu-757. Residues Asp-939–Ala-1150 enclose the JmjC domain. Fe cation is bound by residues Cys-1000, Glu-1002, and His-1118.

Requires Fe(2+) as cofactor. In terms of tissue distribution, expressed predominantly in brain, hair follicles and interfollicular epidermis. No expression in dermis.

It is found in the nucleus. The enzyme catalyses N(6),N(6)-dimethyl-L-lysyl(9)-[histone H3] + 2 2-oxoglutarate + 2 O2 = L-lysyl(9)-[histone H3] + 2 formaldehyde + 2 succinate + 2 CO2. Its function is as follows. Histone demethylase that specifically demethylates both mono- and dimethylated 'Lys-9' of histone H3. May act as a transcription regulator controlling hair biology (via targeting of collagens), neural activity, and cell cycle. This Mus musculus (Mouse) protein is Lysine-specific demethylase hairless (Hr).